Consider the following 961-residue polypeptide: Ubiquitin carboxyl-terminal hydrolase 4 (961 aa).

The DUSP domain maps to 11 to 122 (PDVETQKTEL…GQQPIVRKVV (112 aa)). The necessary for interaction with SART3 stretch occupies residues 27 to 216 (TLQRGAQWYL…LYQGQVLVIE (190 aa)). The short motif at 133–141 (VEVYLLELK) is the Nuclear export signal element. Residues 142–226 (LCENSDPTNV…PQNEDGTWPR (85 aa)) enclose the Ubiquitin-like 1 domain. The tract at residues 219 to 257 (NEDGTWPRQTLQSKSSTAPSRNFTTSSKPSASPYSSMSA) is disordered. Polar residues predominate over residues 225–243 (PRQTLQSKSSTAPSRNFTT). The required for USP4 activation by providing conformational flexibility between the DUSP and catalytic domains stretch occupies residues 229-295 (LQSKSSTAPS…SYNCQEPPSP (67 aa)). Residues 244 to 257 (SSKPSASPYSSMSA) show a composition bias toward low complexity. The region spanning 302–921 (CGLGNLGNTC…AAYVLFYQRR (620 aa)) is the USP domain. The active site involves Cys-311. The segment at 384–386 (PQF) is regulates ubiquitin dissociation. Residues 405–407 (LHE) are necessary for interaction with RBL2. Phosphoserine is present on Ser-445. The segment at 459 to 463 (LVCPE) is necessary for interaction with RB1 and RBL2. Positions 461 and 464 each coordinate Zn(2+). One can recognise a Ubiquitin-like 2 domain in the interval 483–571 (LKKDRIMEVF…IFVYEICTTP (89 aa)). Residues 485 to 773 (KDRIMEVFLV…SQPQKKKKAA (289 aa)) are interacts with DUSP and ubiquitin-like 1 domains and is required for USP4 activation. A disordered region spans residues 641–700 (SSPLEPGACNGSRGSYEGDEEEMDHQEEGKEQLSEVEESGEDSQGGDPTETTQKAKGPPR). Residues Ser-655, Ser-674, and Ser-679 each carry the phosphoserine modification. The Nuclear localization signal signature appears at 765-770 (QPQKKK). The Zn(2+) site is built by Cys-797 and Cys-800. The active site involves His-879. Residues 924–961 (ECPSTSSPVSFPGSDGGAKLSSSQQDLGEEEAYTMDTN) form a disordered region. Over residues 950–961 (LGEEEAYTMDTN) the composition is skewed to acidic residues.

It belongs to the peptidase C19 family. USP4 subfamily. In terms of assembly, interacts with RB1 (both dephosphorylated and hypophosphorylated forms). Interacts with RBL1 and RBL2. Interacts with ADORA2A (via cytoplasmic C-terminus); the interaction is direct. Interacts with SART3; recruits USP4 to its substrate PRPF3. Phosphorylated at Ser-445 by PKB/AKT1 in response to EGF stimulus, promoting its ability deubiquitinate RHEB. Post-translationally, monoubiquitinated by TRIM21. Ubiquitination does not lead to its proteasomal degradation. Autodeubiquitinated. In terms of tissue distribution, expressed in hippocampus and striatum (at protein level).

It localises to the cytoplasm. The protein localises to the nucleus. The enzyme catalyses Thiol-dependent hydrolysis of ester, thioester, amide, peptide and isopeptide bonds formed by the C-terminal Gly of ubiquitin (a 76-residue protein attached to proteins as an intracellular targeting signal).. The completion of the deubiquitinase reaction is mediated by the DUSP and ubiquitin-like 1 domains which promotes the release of ubiquitin from the catalytic site enabling subsequent reactions to occur. Functionally, deubiquitinating enzyme that removes conjugated ubiquitin from target proteins. Deubiquitinates PDPK1. Deubiquitinates TRIM21. Deubiquitinates receptor ADORA2A which increases the amount of functional receptor at the cell surface. Deubiquitinates HAS2. Deubiquitinates RHEB in response to EGF signaling, promoting mTORC1 signaling. May regulate mRNA splicing through deubiquitination of the U4 spliceosomal protein PRPF3. This may prevent its recognition by the U5 component PRPF8 thereby destabilizing interactions within the U4/U6.U5 snRNP. May also play a role in the regulation of quality control in the ER. This is Ubiquitin carboxyl-terminal hydrolase 4 (Usp4) from Rattus norvegicus (Rat).